Consider the following 131-residue polypeptide: Small ribosomal subunit protein bS6 (131 aa).

The interval 98–131 (EASPMVKAKDERRERRDDFANETADDAEAGDSEE) is disordered. A compositionally biased stretch (basic and acidic residues) spans 104–116 (KAKDERRERRDDF). A compositionally biased stretch (acidic residues) spans 120–131 (TADDAEAGDSEE).

The protein belongs to the bacterial ribosomal protein bS6 family.

Its function is as follows. Binds together with bS18 to 16S ribosomal RNA. This Cronobacter sakazakii (strain ATCC BAA-894) (Enterobacter sakazakii) protein is Small ribosomal subunit protein bS6.